A 386-amino-acid chain; its full sequence is Homoserine O-succinyltransferase (386 aa).

The AB hydrolase-1 domain occupies 49 to 358; that stretch reads NAILICHALS…DAEQGHDSFL (310 aa). The active-site Nucleophile is Ser-156. Arg-226 lines the substrate pocket. Catalysis depends on residues Asp-321 and His-354. Asp-355 provides a ligand contact to substrate.

This sequence belongs to the AB hydrolase superfamily. MetX family. Homodimer.

Its subcellular location is the cytoplasm. It carries out the reaction L-homoserine + succinyl-CoA = O-succinyl-L-homoserine + CoA. Its pathway is amino-acid biosynthesis; L-methionine biosynthesis via de novo pathway; O-succinyl-L-homoserine from L-homoserine: step 1/1. In terms of biological role, transfers a succinyl group from succinyl-CoA to L-homoserine, forming succinyl-L-homoserine. This Acinetobacter baumannii (strain AB307-0294) protein is Homoserine O-succinyltransferase.